A 61-amino-acid chain; its full sequence is MFTLKKTLLLLFFLGTINLSLCEEERNAEEERRDGDDEMDVEVKKRFITGLISGLMKALGK.

An N-terminal signal peptide occupies residues 1–22 (MFTLKKTLLLLFFLGTINLSLC). The propeptide at 23-44 (EEERNAEEERRDGDDEMDVEVK) is removed in mature form. Lysine 61 carries the post-translational modification Lysine amide.

This sequence belongs to the frog skin active peptide (FSAP) family. Temporin subfamily. Expressed by the skin glands.

It is found in the secreted. Functionally, antimicrobial peptide. Active against some Gram-positive and Gram-negative bacterial strains. Active against fungus C.glabrata 090902 but not against C.albicans ATCC 12231. Shows weak hemolytic activity against human erythrocytes. The protein is Temporin-SN4 of Sylvirana spinulosa (Fine-spined frog).